Here is a 157-residue protein sequence, read N- to C-terminus: Dihydrofolate reductase type 5 (157 aa).

The DHFR domain occupies 2–156 (KVSLMAAKAK…INYCYQIWQK (155 aa)).

This sequence belongs to the dihydrofolate reductase family. In terms of assembly, homodimer.

The enzyme catalyses (6S)-5,6,7,8-tetrahydrofolate + NADP(+) = 7,8-dihydrofolate + NADPH + H(+). The protein operates within cofactor biosynthesis; tetrahydrofolate biosynthesis; 5,6,7,8-tetrahydrofolate from 7,8-dihydrofolate: step 1/1. Functionally, key enzyme in folate metabolism. Catalyzes an essential reaction for de novo glycine and purine synthesis, and for DNA precursor synthesis. This Escherichia coli protein is Dihydrofolate reductase type 5 (dhfrV).